Reading from the N-terminus, the 161-residue chain is Nucleotide-binding protein Gmet_3206 (161 aa).

The protein belongs to the YajQ family.

Its function is as follows. Nucleotide-binding protein. The protein is Nucleotide-binding protein Gmet_3206 of Geobacter metallireducens (strain ATCC 53774 / DSM 7210 / GS-15).